We begin with the raw amino-acid sequence, 632 residues long: 1-deoxy-D-xylulose-5-phosphate synthase (632 aa).

Residues histidine 79 and 120-122 (GHA) contribute to the thiamine diphosphate site. Residue aspartate 151 participates in Mg(2+) binding. Residues 152-153 (GS), asparagine 180, phenylalanine 292, and glutamate 376 contribute to the thiamine diphosphate site. Residue asparagine 180 participates in Mg(2+) binding.

This sequence belongs to the transketolase family. DXPS subfamily. As to quaternary structure, homodimer. The cofactor is Mg(2+). Requires thiamine diphosphate as cofactor.

The enzyme catalyses D-glyceraldehyde 3-phosphate + pyruvate + H(+) = 1-deoxy-D-xylulose 5-phosphate + CO2. It functions in the pathway metabolic intermediate biosynthesis; 1-deoxy-D-xylulose 5-phosphate biosynthesis; 1-deoxy-D-xylulose 5-phosphate from D-glyceraldehyde 3-phosphate and pyruvate: step 1/1. In terms of biological role, catalyzes the acyloin condensation reaction between C atoms 2 and 3 of pyruvate and glyceraldehyde 3-phosphate to yield 1-deoxy-D-xylulose-5-phosphate (DXP). The polypeptide is 1-deoxy-D-xylulose-5-phosphate synthase (Azobacteroides pseudotrichonymphae genomovar. CFP2).